The sequence spans 115 residues: Large ribosomal subunit protein bL19 (115 aa).

Belongs to the bacterial ribosomal protein bL19 family.

Functionally, this protein is located at the 30S-50S ribosomal subunit interface and may play a role in the structure and function of the aminoacyl-tRNA binding site. This Lawsonia intracellularis (strain PHE/MN1-00) protein is Large ribosomal subunit protein bL19.